A 688-amino-acid chain; its full sequence is MDAYEATKVVFSRIQALDPDHAAKIMGLLLIQDHGDKEMIRLAFGPEALLHSVMAQARKELALLPPPPPPSSSSPTVPAAHSPFLLSRQNSGRGPAPSPSPLSASSPSSWAQAQPFSRSNGSVDEVVGAGEELISPANSGGGAAANAPPFFPRGGDVLLDDFQLQEQLAFLNEGGVNPSHPLQGFDGAECRSPGPGEGGGMFPYGLGWANGGPGHRRSASVNELCLGGGSSDGFGWKPCLYYARGFCKNGSSCRFVHGDDAAALTGAAMDAATAEQQQCQDFLLRSKSQRLGPAAFPYSPTGSLPGSPSAATKCLSLLLQQQHNDNQRAAAAAALMLGGSDEAHKFMGRPRLDRVDFASMMNPGSRQIYLTFPADSTFREEDVSNYFSIYGPVHDVRIPYQQKRMFGFVTFVYPETVKLILAKGNPHFICDARVLVKPYKEKGKVPDKYRKHQGDFSGCTTPTGLDGRDPFDLHQLGARMLQHSNSTNEMMLRRKLEEQQQAAELQQAIELHSRRLMDLQLLDLKNRAAAAVTTAMAMTIPTANAFGSSQPLATTMVESPPDSGEQLKGTGYFTEERKMVNGGGDKEESAGEASLNADSDQSLEHNLPDSPFASPTKSSVSAHQSFTTTDTGVVATSSCSASHVGISAGTNAGGGINHLRPSTLDIPSPRDFFSVSSRLASDHGAIGM.

The disordered stretch occupies residues 62-123 (ALLPPPPPPS…QPFSRSNGSV (62 aa)). A compositionally biased stretch (low complexity) spans 101–117 (PLSASSPSSWAQAQPFS). A C3H1-type zinc finger spans residues 233–260 (GFGWKPCLYYARGFCKNGSSCRFVHGDD). The RRM domain occupies 366 to 442 (RQIYLTFPAD…RVLVKPYKEK (77 aa)). A coiled-coil region spans residues 487 to 522 (TNEMMLRRKLEEQQQAAELQQAIELHSRRLMDLQLL). The disordered stretch occupies residues 552–624 (LATTMVESPP…PTKSSVSAHQ (73 aa)). The span at 574-589 (TEERKMVNGGGDKEES) shows a compositional bias: basic and acidic residues. A compositionally biased stretch (polar residues) spans 613 to 624 (ASPTKSSVSAHQ).

The sequence is that of Zinc finger CCCH domain-containing protein 22 from Oryza sativa subsp. japonica (Rice).